The primary structure comprises 512 residues: Kelch repeat protein C2 (512 aa).

One can recognise a BTB domain in the interval 2–67 (ESVIFSINGE…IRWKKINITI (66 aa)). The BACK domain maps to 102 to 176 (CIRMFNFSKR…LLKWIHKNPN (75 aa)). Kelch repeat units lie at residues 216-261 (IKHN…LHNC), 262-307 (LYII…VNDG), 309-354 (LYVI…FVND), 356-403 (IYVM…EYDG), 405-449 (IYVI…SCGD), and 452-498 (LIIA…THKS).

Belongs to the poxviruses Kelch family.

The polypeptide is Kelch repeat protein C2 (Vaccinia virus (strain Western Reserve) (VACV)).